A 176-amino-acid polypeptide reads, in one-letter code: Peptidyl-tRNA hydrolase (176 aa).

Residue Tyr14 participates in tRNA binding. Residue His19 is the Proton acceptor of the active site. Residues Tyr65, Asn67, and Asn113 each contribute to the tRNA site.

This sequence belongs to the PTH family. Monomer.

Its subcellular location is the cytoplasm. It catalyses the reaction an N-acyl-L-alpha-aminoacyl-tRNA + H2O = an N-acyl-L-amino acid + a tRNA + H(+). Its function is as follows. Hydrolyzes ribosome-free peptidyl-tRNAs (with 1 or more amino acids incorporated), which drop off the ribosome during protein synthesis, or as a result of ribosome stalling. In terms of biological role, catalyzes the release of premature peptidyl moieties from peptidyl-tRNA molecules trapped in stalled 50S ribosomal subunits, and thus maintains levels of free tRNAs and 50S ribosomes. In Phytoplasma mali (strain AT), this protein is Peptidyl-tRNA hydrolase.